The sequence spans 166 residues: Phospholipase A2 inhibitor CgMIP-II (166 aa).

The first 19 residues, 1 to 19, serve as a signal peptide directing secretion; the sequence is MRLILLSGLLLLGTFLANG. The region spanning 46–161 is the C-type lectin domain; sequence LRYALMTVHN…CDDNLLVVCE (116 aa). 2 disulfide bridges follow: cysteine 83–cysteine 160 and cysteine 138–cysteine 152. Residue asparagine 122 is glycosylated (N-linked (GlcNAc...) asparagine).

This sequence belongs to the alpha-type phospholipase A2 inhibitor family. In terms of assembly, homomer composed of 20-25-kDa subunits that form oligomers of 180 kDa. Post-translationally, N-glycosylated. The glycosidic chain may contain superficial sialic acid residues. In terms of tissue distribution, expressed by the liver.

The protein resides in the secreted. Functionally, selectively inhibits the toxic properties of myotoxin-II from the same venom (AC P81165). Does not inhibit PLA2, anti-coagulant and lethal activities of the basic myotoxin I from the same venom (AC P0DQP6), nor the different crotoxin forms (heterodimer or subunit B alone). Does not block the enzymatic activity of crude acidic PLA2 fractions from the same venom. This Cerrophidion godmani (Porthidium godmani) protein is Phospholipase A2 inhibitor CgMIP-II.